Consider the following 326-residue polypeptide: Vitamin B12 import system permease protein BtuC (326 aa).

9 helical membrane passes run 13-35 (IRWL…CAGE), 55-77 (IRLP…GAVM), 90-107 (LLGV…AVLL), 111-133 (QLPN…LILL), 146-168 (LLAG…YFST), 188-205 (WRQS…LWIC), 242-264 (MVGV…PHIL), 274-296 (VLLP…VARL), and 303-322 (LPIG…WLLL).

This sequence belongs to the binding-protein-dependent transport system permease family. FecCD subfamily. The complex is composed of two ATP-binding proteins (BtuD), two transmembrane proteins (BtuC) and a solute-binding protein (BtuF).

Its subcellular location is the cell inner membrane. Part of the ABC transporter complex BtuCDF involved in vitamin B12 import. Involved in the translocation of the substrate across the membrane. This Shigella flexneri protein is Vitamin B12 import system permease protein BtuC.